Here is a 246-residue protein sequence, read N- to C-terminus: Probable transcriptional regulatory protein GK2594 (246 aa).

This sequence belongs to the TACO1 family.

It is found in the cytoplasm. The polypeptide is Probable transcriptional regulatory protein GK2594 (Geobacillus kaustophilus (strain HTA426)).